Reading from the N-terminus, the 210-residue chain is uncharacterized protein (210 aa).

Residues 101-114 (QELPEPSSPQSQSS) show a composition bias toward low complexity. Positions 101-166 (QELPEPSSPQ…SSGVSSDLQK (66 aa)) are disordered. Residues 147 to 164 (RSTSPVTASTSSGVSSDL) show a composition bias toward polar residues.

This is an uncharacterized protein from Alcelaphine herpesvirus 1 (strain C500) (AlHV-1).